A 551-amino-acid chain; its full sequence is Cytochrome bc1 complex cytochrome b subunit (551 aa).

Residues 44-64 (FLLGEIALYSFIVLLLTGVYL) form a helical membrane-spanning segment. The heme site is built by His113 and His127. The next 3 membrane-spanning stretches (helical) occupy residues 117–137 (ALMFTAAIMVHLARIFFTGAF), 145–165 (WVIGSLLLILAMFEGYFGYSM), and 188–208 (VIGTWLHWALFGGDFPGTILI). Heme contacts are provided by His215 and His230. The next 5 membrane-spanning stretches (helical) occupy residues 216–236 (ILLIPGVILALIGLHLALVWF), 265–285 (SGAFFAAIVGVLGLMGGFLQI), 334–354 (PVWVAVIMALVFVLLITYPFL), 380–400 (IGAMAITFYMVLTLAAMNDII), and 417–437 (IGMVILPLLVYFITYRWCIGL). Residues 532-551 (ALREHQDSIASSPNGERGKH) are disordered.

It belongs to the cytochrome b family. As to quaternary structure, the cytochrome bc1 complex is composed of a cytochrome b (QcrB), the Rieske iron-sulfur protein (QcrA) and a diheme cytochrome c (QcrC) subunit. Heme is required as a cofactor.

It localises to the cell membrane. It carries out the reaction a quinol + 2 Fe(III)-[cytochrome c](out) = a quinone + 2 Fe(II)-[cytochrome c](out) + 2 H(+)(out). Its function is as follows. Cytochrome b subunit of the cytochrome bc1 complex, an essential component of the respiratory electron transport chain required for ATP synthesis. The bc1 complex catalyzes the oxidation of ubiquinol and the reduction of cytochrome c in the respiratory chain. The bc1 complex operates through a Q-cycle mechanism that couples electron transfer to generation of the proton gradient that drives ATP synthesis. The cytochrome b subunit contains two ubiquinol reactive sites: the oxidation (QP) site and the reduction (QN) site. In Mycobacterium leprae (strain TN), this protein is Cytochrome bc1 complex cytochrome b subunit (qcrB).